The sequence spans 199 residues: NAD(P)H dehydrogenase (quinone) (199 aa).

The region spanning 4 to 190 (VLVLYYSAYG…AGARYQGRQI (187 aa)) is the Flavodoxin-like domain. FMN contacts are provided by residues 10–15 (SAYGHI) and 78–80 (TRF). Tyr-12 provides a ligand contact to NAD(+). Trp-98 contributes to the substrate binding site. FMN contacts are provided by residues 113 to 119 (SSATQHG) and His-134.

This sequence belongs to the WrbA family. FMN is required as a cofactor.

It carries out the reaction a quinone + NADH + H(+) = a quinol + NAD(+). The enzyme catalyses a quinone + NADPH + H(+) = a quinol + NADP(+). This Bradyrhizobium diazoefficiens (strain JCM 10833 / BCRC 13528 / IAM 13628 / NBRC 14792 / USDA 110) protein is NAD(P)H dehydrogenase (quinone).